The sequence spans 496 residues: Probable cytosol aminopeptidase (496 aa).

2 residues coordinate Mn(2+): Lys264 and Asp269. Lys276 is a catalytic residue. Asp287, Asp346, and Glu348 together coordinate Mn(2+). Residue Arg350 is part of the active site.

It belongs to the peptidase M17 family. Mn(2+) is required as a cofactor.

The protein localises to the cytoplasm. The catalysed reaction is Release of an N-terminal amino acid, Xaa-|-Yaa-, in which Xaa is preferably Leu, but may be other amino acids including Pro although not Arg or Lys, and Yaa may be Pro. Amino acid amides and methyl esters are also readily hydrolyzed, but rates on arylamides are exceedingly low.. The enzyme catalyses Release of an N-terminal amino acid, preferentially leucine, but not glutamic or aspartic acids.. Functionally, presumably involved in the processing and regular turnover of intracellular proteins. Catalyzes the removal of unsubstituted N-terminal amino acids from various peptides. The sequence is that of Probable cytosol aminopeptidase from Geobacter sulfurreducens (strain ATCC 51573 / DSM 12127 / PCA).